Reading from the N-terminus, the 559-residue chain is T-complex protein 1 subunit gamma (559 aa).

A disulfide bridge connects residues Cys-369 and Cys-375. The disordered stretch occupies residues Gly-537 to Gly-559.

Belongs to the TCP-1 chaperonin family. As to quaternary structure, heterooligomeric complex of about 850 to 900 kDa that forms two stacked rings, 12 to 16 nm in diameter.

Its subcellular location is the cytoplasm. Its function is as follows. Molecular chaperone; assists the folding of proteins upon ATP hydrolysis. Known to play a role, in vitro, in the folding of actin and tubulin. This is T-complex protein 1 subunit gamma from Tetrahymena pyriformis.